The chain runs to 479 residues: tRNA-dihydrouridine(20) synthase [NAD(P)+] (479 aa).

FMN-binding positions include 14-16 (PMV) and Q87. The active-site Proton donor is the C116. Residues K159, H187, 221–223 (NGD), and 245–246 (AR) contribute to the FMN site.

The protein belongs to the Dus family. Dus2 subfamily. FMN is required as a cofactor.

It is found in the cytoplasm. The protein localises to the nucleus. It catalyses the reaction 5,6-dihydrouridine(20) in tRNA + NADP(+) = uridine(20) in tRNA + NADPH + H(+). It carries out the reaction 5,6-dihydrouridine(20) in tRNA + NAD(+) = uridine(20) in tRNA + NADH + H(+). The enzyme catalyses a 5,6-dihydrouridine in mRNA + NAD(+) = a uridine in mRNA + NADH + H(+). The catalysed reaction is a 5,6-dihydrouridine in mRNA + NADP(+) = a uridine in mRNA + NADPH + H(+). Functionally, catalyzes the NADPH-dependent synthesis of dihydrouridine, a modified base found in the D-loop of most tRNAs. Specifically modifies U20 in cytoplasmic tRNAs. Also able to mediate dihydrouridylation of some mRNAs, thereby affecting their translation. This chain is tRNA-dihydrouridine(20) synthase [NAD(P)+], found in Schizosaccharomyces pombe (strain 972 / ATCC 24843) (Fission yeast).